The following is a 497-amino-acid chain: Probable cytosol aminopeptidase (497 aa).

Mn(2+) is bound by residues Lys263 and Asp268. The active site involves Lys275. Asp286, Asp345, and Glu347 together coordinate Mn(2+). Arg349 is an active-site residue.

This sequence belongs to the peptidase M17 family. Requires Mn(2+) as cofactor.

Its subcellular location is the cytoplasm. It carries out the reaction Release of an N-terminal amino acid, Xaa-|-Yaa-, in which Xaa is preferably Leu, but may be other amino acids including Pro although not Arg or Lys, and Yaa may be Pro. Amino acid amides and methyl esters are also readily hydrolyzed, but rates on arylamides are exceedingly low.. The enzyme catalyses Release of an N-terminal amino acid, preferentially leucine, but not glutamic or aspartic acids.. Its function is as follows. Presumably involved in the processing and regular turnover of intracellular proteins. Catalyzes the removal of unsubstituted N-terminal amino acids from various peptides. This chain is Probable cytosol aminopeptidase, found in Brucella ovis (strain ATCC 25840 / 63/290 / NCTC 10512).